The primary structure comprises 271 residues: MSQGYLPFPNIDPVFFSIGPISVRWYGLMYLFGFLFAMWLANRRADKPGSGWTREQVSDLLFAGFLGVVLGGRIGYVLFYNFDLFLADPIYLFKVWTGGMSFHGGLLGVITAMLWYAKKNGRTFFGVADFVAPLVPFGLGVGRLGNFMNGELWGRVTDVPWAMVFPTGGPLPRHPSQLYEMALEGVLLFFILNWFIRKPRPLGSVSGLFLAGYGTFRFLVEYVREPDAQLGLFGGFISMGQILSSPMIIGGLALMAWAYKRGHYQDKVTVK.

The next 7 helical transmembrane spans lie at 21–41 (ISVR…MWLA), 60–80 (LLFA…VLFY), 95–115 (VWTG…AMLW), 124–144 (FFGV…VGRL), 176–196 (SQLY…NWFI), 203–223 (GSVS…VEYV), and 230–250 (LGLF…MIIG). An a 1,2-diacyl-sn-glycero-3-phospho-(1'-sn-glycerol)-binding site is contributed by Arg-143.

It belongs to the Lgt family.

Its subcellular location is the cell inner membrane. The enzyme catalyses L-cysteinyl-[prolipoprotein] + a 1,2-diacyl-sn-glycero-3-phospho-(1'-sn-glycerol) = an S-1,2-diacyl-sn-glyceryl-L-cysteinyl-[prolipoprotein] + sn-glycerol 1-phosphate + H(+). Its pathway is protein modification; lipoprotein biosynthesis (diacylglyceryl transfer). Its function is as follows. Catalyzes the transfer of the diacylglyceryl group from phosphatidylglycerol to the sulfhydryl group of the N-terminal cysteine of a prolipoprotein, the first step in the formation of mature lipoproteins. This is Phosphatidylglycerol--prolipoprotein diacylglyceryl transferase from Vibrio vulnificus (strain YJ016).